The following is a 360-amino-acid chain: Protein Wnt-2 (360 aa).

Residues 1-25 form the signal peptide; it reads MNAPLGGIWLWLPLLLTWLTPEVSS. 11 disulfide bridges follow: Cys76/Cys87, Cys127/Cys135, Cys137/Cys157, Cys206/Cys220, Cys208/Cys215, Cys278/Cys309, Cys294/Cys304, Cys308/Cys348, Cys324/Cys339, Cys326/Cys336, and Cys331/Cys332. Residue Ser212 is the site of O-palmitoleoyl serine; by PORCN attachment. N-linked (GlcNAc...) asparagine glycosylation occurs at Asn295.

This sequence belongs to the Wnt family. In terms of processing, palmitoleoylation is required for efficient binding to frizzled receptors. Depalmitoleoylation leads to Wnt signaling pathway inhibition.

It localises to the secreted. It is found in the extracellular space. The protein resides in the extracellular matrix. Ligand for members of the frizzled family of seven transmembrane receptors. Functions in the canonical Wnt signaling pathway that results in activation of transcription factors of the TCF/LEF family. Functions as a upstream regulator of FGF10 expression. Plays an important role in embryonic lung development. May contribute to embryonic brain development by regulating the proliferation of dopaminergic precursors and neurons. This is Protein Wnt-2 (WNT2) from Equus caballus (Horse).